Reading from the N-terminus, the 155-residue chain is Phytohormone-binding protein CSBP (155 aa).

Trans-zeatin-binding positions include Leu-22, Gln-67, Glu-69, and 139-142 (TLMY). Gln-67 is a gibberellin A3 binding site. Residue Thr-139 participates in gibberellin A3 binding.

Belongs to the BetVI family. As to quaternary structure, monomer.

Binds the cytokinin trans-zeatin in vitro. Binds gibberellin A3 (GA3) in vitro. The protein is Phytohormone-binding protein CSBP of Vigna radiata var. radiata (Mung bean).